A 218-amino-acid polypeptide reads, in one-letter code: Ribosomal RNA large subunit methyltransferase E (218 aa).

Gly64, Trp66, Asp92, Asp108, and Asp133 together coordinate S-adenosyl-L-methionine. Lys173 (proton acceptor) is an active-site residue.

This sequence belongs to the class I-like SAM-binding methyltransferase superfamily. RNA methyltransferase RlmE family.

Its subcellular location is the cytoplasm. It carries out the reaction uridine(2552) in 23S rRNA + S-adenosyl-L-methionine = 2'-O-methyluridine(2552) in 23S rRNA + S-adenosyl-L-homocysteine + H(+). Its function is as follows. Specifically methylates the uridine in position 2552 of 23S rRNA at the 2'-O position of the ribose in the fully assembled 50S ribosomal subunit. The polypeptide is Ribosomal RNA large subunit methyltransferase E (Paracidovorax citrulli (strain AAC00-1) (Acidovorax citrulli)).